The following is a 167-amino-acid chain: SsrA-binding protein (167 aa).

The interval 139–167 is disordered; that stretch reads QAHDKRHAEKEREWQRDKQRIMRAHNRNA. The span at 144–158 shows a compositional bias: basic and acidic residues; that stretch reads RHAEKEREWQRDKQR.

Belongs to the SmpB family.

The protein localises to the cytoplasm. Required for rescue of stalled ribosomes mediated by trans-translation. Binds to transfer-messenger RNA (tmRNA), required for stable association of tmRNA with ribosomes. tmRNA and SmpB together mimic tRNA shape, replacing the anticodon stem-loop with SmpB. tmRNA is encoded by the ssrA gene; the 2 termini fold to resemble tRNA(Ala) and it encodes a 'tag peptide', a short internal open reading frame. During trans-translation Ala-aminoacylated tmRNA acts like a tRNA, entering the A-site of stalled ribosomes, displacing the stalled mRNA. The ribosome then switches to translate the ORF on the tmRNA; the nascent peptide is terminated with the 'tag peptide' encoded by the tmRNA and targeted for degradation. The ribosome is freed to recommence translation, which seems to be the essential function of trans-translation. In Xylella fastidiosa (strain 9a5c), this protein is SsrA-binding protein.